Here is a 242-residue protein sequence, read N- to C-terminus: Protein GrpE (242 aa).

A compositionally biased stretch (polar residues) spans 1–10 (MAGENSSTET). The segment at 1–64 (MAGENSSTET…QSTESTSKEK (64 aa)) is disordered. The span at 11-20 (KNQEINEKTP) shows a compositional bias: basic and acidic residues. Composition is skewed to polar residues over residues 21 to 32 (EVQTFETNVEFE) and 40 to 59 (DTEL…STES).

Belongs to the GrpE family. Homodimer.

Its subcellular location is the cytoplasm. Participates actively in the response to hyperosmotic and heat shock by preventing the aggregation of stress-denatured proteins, in association with DnaK and GrpE. It is the nucleotide exchange factor for DnaK and may function as a thermosensor. Unfolded proteins bind initially to DnaJ; upon interaction with the DnaJ-bound protein, DnaK hydrolyzes its bound ATP, resulting in the formation of a stable complex. GrpE releases ADP from DnaK; ATP binding to DnaK triggers the release of the substrate protein, thus completing the reaction cycle. Several rounds of ATP-dependent interactions between DnaJ, DnaK and GrpE are required for fully efficient folding. In Trichodesmium erythraeum (strain IMS101), this protein is Protein GrpE.